The primary structure comprises 699 residues: MVSMQISDSLKQKAEKCGIALSHYDIDGHLIFADEKTVSTFVELLQPPPKAKGQFDDVLAAFENEPIDYRLNRLDLPPSAEYRYQLTDESNAILLEKILSNLSVLSLPPLPFGYYQLSIFSDTEQYRIRLLISPKTAFQPPVLENKKVWGVNVQLYSLRSEQNWGIGDFGDLAYLIEQSAKQGADYVGINPLHLPYPAVPNWASPYSSSSRRWLNFLYLDIPDLPEFKRCRSVQNWFKREDIQAKIAALRESDCVDYSSILALKLTALEPLFDFFQRSQSVEIVTRRKIFAEYLKNKGEPLLLQGLFNVLDLQEHADHQAEENTIGWLGWRKEWQHLSAAKRKALLKTHHEKIQFFAWLQWLTEEQLSALQNLCKQSGMKLGIYGDLAVNSSRGSADVWSDPDLYCVNASIGAPPDPLGPVGQNWNLPPYNPTVLKARGFAPFIDMLCANMQYFGVLRIDHVMGLFRLWWIPKGKTAADGAYVHYPFDELMAILAIESVRNECLIIGEDLGTVPDEVRWKLNEFQIFSYFVLYFAQRNGEFPRISDYPRNAYATIGTHDVPSLQSFWHCRDLELFNQLGILNGEVLKQKYDQRVMDKQALLNSLHRDNYLPPHYEGDALSMAMHDYLNRMIHYYLAESNSRLIGVQLENLLSQEISFNLPSTSNEYPNWCKKLAQPLAFIFSNEALKTFFVQINQGRNV.

It belongs to the disproportionating enzyme family.

It is found in the cytoplasm. The catalysed reaction is Transfers a segment of a (1-&gt;4)-alpha-D-glucan to a new position in an acceptor, which may be glucose or a (1-&gt;4)-alpha-D-glucan.. The polypeptide is 4-alpha-glucanotransferase (malQ) (Haemophilus influenzae (strain ATCC 51907 / DSM 11121 / KW20 / Rd)).